We begin with the raw amino-acid sequence, 275 residues long: Phosphatidylglycerol--prolipoprotein diacylglyceryl transferase (275 aa).

Helical transmembrane passes span 22–42 (LSVRWYGLMYLFGFAFAMWLA), 61–81 (LLFYGFLGVILGGRVGYVLFY), 96–116 (IWTGGMSFHGGLIGVITAMIW), 125–145 (FFTVADFVAPLIPFGLGVGRI), 177–197 (SQLYQFALEGVVLFIILNLFW), 204–224 (GAISGLFLFCYGLFRFLVEFV), and 238–258 (ISMGQILSMPMIVAGALMVWA). Arginine 144 lines the a 1,2-diacyl-sn-glycero-3-phospho-(1'-sn-glycerol) pocket.

It belongs to the Lgt family.

The protein resides in the cell inner membrane. The enzyme catalyses L-cysteinyl-[prolipoprotein] + a 1,2-diacyl-sn-glycero-3-phospho-(1'-sn-glycerol) = an S-1,2-diacyl-sn-glyceryl-L-cysteinyl-[prolipoprotein] + sn-glycerol 1-phosphate + H(+). It functions in the pathway protein modification; lipoprotein biosynthesis (diacylglyceryl transfer). In terms of biological role, catalyzes the transfer of the diacylglyceryl group from phosphatidylglycerol to the sulfhydryl group of the N-terminal cysteine of a prolipoprotein, the first step in the formation of mature lipoproteins. The chain is Phosphatidylglycerol--prolipoprotein diacylglyceryl transferase from Aeromonas salmonicida (strain A449).